The chain runs to 464 residues: Sulfoacetaldehyde dehydrogenase (acylating) (464 aa).

The active-site Nucleophile is the cysteine 241.

This sequence belongs to the aldehyde dehydrogenase family.

It catalyses the reaction sulfoacetaldehyde + NADP(+) + CoA = sulfoacetyl-CoA + NADPH + H(+). In terms of biological role, involved in the degradation of sulfoacetate. Catalyzes the conversion of sulfoacetyl-CoA and NADPH to sulfoacetaldehyde, CoA and NADP(+). A much lower level of activity (1%) is observed when NADP(+) is replaced with NAD(+). The sequence is that of Sulfoacetaldehyde dehydrogenase (acylating) from Bilophila wadsworthia (strain 3_1_6).